The primary structure comprises 307 residues: Taste receptor type 2 member 10 (307 aa).

Residues 1–6 are Extracellular-facing; it reads MLSVVE. The helical transmembrane segment at 7 to 27 threads the bilayer; the sequence is GILILVVISESVFGVLGNGFI. The Cytoplasmic portion of the chain corresponds to 28–42; sequence GLVNCIDCAKNKLST. Residues 43 to 63 traverse the membrane as a helical segment; that stretch reads IGFILTGLAISRIFLIWIIIT. At 64–100 the chain is on the extracellular side; the sequence is DGFIQIFSPDVYASGNLIEYISYFWVITNQSSIWFAT. N-linked (GlcNAc...) asparagine glycosylation occurs at Asn92. A helical transmembrane segment spans residues 101–121; it reads SLSIFYFLKIANFSNYIFLWL. Topologically, residues 122 to 126 are cytoplasmic; that stretch reads KSRIN. A helical transmembrane segment spans residues 127 to 147; the sequence is RVLPLLMGFLLISCLLNFAYI. Over 148–179 the chain is Extracellular; it reads VKILNDLKMKNDTVWRLNMYKSEYFIKQLLLN. Asn158 carries N-linked (GlcNAc...) asparagine glycosylation. The helical transmembrane segment at 180-200 threads the bilayer; it reads LGVIFFFTLSLITSVLLIISL. The Cytoplasmic segment spans residues 201–227; it reads WRHNRQMQSNVTGLRDSITEAHVKAMK. Residues 228–248 traverse the membrane as a helical segment; that stretch reads VLISFIILFILYFIGIAIEIS. Residues 249–257 lie on the Extracellular side of the membrane; it reads YFTVPENKL. Residues 258 to 278 traverse the membrane as a helical segment; that stretch reads LLIFGMTTTAIYPWGHSFILI. At 279–307 the chain is on the cytoplasmic side; that stretch reads LGNSKLKQASLRVLQQLKCCEERKNLRAT.

Belongs to the G-protein coupled receptor T2R family.

Its subcellular location is the membrane. Its function is as follows. Receptor that may play a role in the perception of bitterness and is gustducin-linked. May play a role in sensing the chemical composition of the gastrointestinal content. The activity of this receptor may stimulate alpha gustducin, mediate PLC-beta-2 activation and lead to the gating of TRPM5. The sequence is that of Taste receptor type 2 member 10 (TAS2R10) from Papio hamadryas (Hamadryas baboon).